The following is a 333-amino-acid chain: Large ribosomal subunit protein uL3 (333 aa).

It belongs to the universal ribosomal protein uL3 family. In terms of assembly, part of the 50S ribosomal subunit. Forms a cluster with proteins L14 and L24e.

Its function is as follows. One of the primary rRNA binding proteins, it binds directly near the 3'-end of the 23S rRNA, where it nucleates assembly of the 50S subunit. The sequence is that of Large ribosomal subunit protein uL3 from Methanocorpusculum labreanum (strain ATCC 43576 / DSM 4855 / Z).